Consider the following 414-residue polypeptide: 2,3-diketo-5-methylthiopentyl-1-phosphate enolase (414 aa).

The Proton acceptor role is filled by K99. Residues K148, 174–177 (KDDE), H265, G338, and 360–361 (GG) contribute to the substrate site. Mg(2+)-binding residues include K174, D176, and E177. N6-carboxylysine is present on K174.

The protein belongs to the RuBisCO large chain family. Type IV subfamily. As to quaternary structure, homodimer. Mg(2+) serves as cofactor.

It catalyses the reaction 5-methylsulfanyl-2,3-dioxopentyl phosphate = 2-hydroxy-5-methylsulfanyl-3-oxopent-1-enyl phosphate. It functions in the pathway amino-acid biosynthesis; L-methionine biosynthesis via salvage pathway; L-methionine from S-methyl-5-thio-alpha-D-ribose 1-phosphate: step 3/6. Catalyzes the enolization of 2,3-diketo-5-methylthiopentyl-1-phosphate (DK-MTP-1-P) into 2-hydroxy-3-keto-5-methylthiopentenyl-1-phosphate (HK-MTPenyl-1-P). The protein is 2,3-diketo-5-methylthiopentyl-1-phosphate enolase of Bacillus anthracis (strain CDC 684 / NRRL 3495).